We begin with the raw amino-acid sequence, 123 residues long: Fluoride-specific ion channel FluC (123 aa).

4 helical membrane passes run 7-27, 39-59, 68-88, and 100-120; these read VAIA…SGIL, LVNS…FWGI, FFGT…YETF, and ALNI…GFIL. Glycine 75 and serine 78 together coordinate Na(+).

Belongs to the fluoride channel Fluc/FEX (TC 1.A.43) family.

It is found in the cell membrane. The catalysed reaction is fluoride(in) = fluoride(out). Its activity is regulated as follows. Na(+) is not transported, but it plays an essential structural role and its presence is essential for fluoride channel function. Functionally, fluoride-specific ion channel. Important for reducing fluoride concentration in the cell, thus reducing its toxicity. The polypeptide is Fluoride-specific ion channel FluC (Thermococcus onnurineus (strain NA1)).